The following is a 1207-amino-acid chain: DNA-directed RNA polymerase subunit beta (1207 aa).

Belongs to the RNA polymerase beta chain family. The RNAP catalytic core consists of 2 alpha, 1 beta, 1 beta' and 1 omega subunit. When a sigma factor is associated with the core the holoenzyme is formed, which can initiate transcription.

The catalysed reaction is RNA(n) + a ribonucleoside 5'-triphosphate = RNA(n+1) + diphosphate. DNA-dependent RNA polymerase catalyzes the transcription of DNA into RNA using the four ribonucleoside triphosphates as substrates. The protein is DNA-directed RNA polymerase subunit beta of Enterococcus faecalis (strain ATCC 700802 / V583).